The sequence spans 287 residues: Beta-lactamase GES-5 (287 aa).

The signal sequence occupies residues 1–18; that stretch reads MRFIHALLLAGIAHSAYA. Cysteines 63 and 233 form a disulfide. Residue Ser-64 is the Nucleophile; acyl-ester intermediate of the active site. Residues Ser-64, Ser-125, Asn-127, Thr-230, Thr-232, and Arg-238 each contribute to the imipenem site.

This sequence belongs to the class-A beta-lactamase family.

Its subcellular location is the secreted. It catalyses the reaction a beta-lactam + H2O = a substituted beta-amino acid. Inhibited by the beta-lactamase-blocking agents clavulanic acid, sulbactam and tazobactam, via a covalent binding to Ser-64. Functionally, confers resistance to penicillins, cephalosporins and carbapenems. Has carbapenem-hydrolyzing activity. In Klebsiella pneumoniae, this protein is Beta-lactamase GES-5.